We begin with the raw amino-acid sequence, 465 residues long: Asparagine--tRNA ligase (465 aa).

The protein belongs to the class-II aminoacyl-tRNA synthetase family. As to quaternary structure, homodimer.

It is found in the cytoplasm. It carries out the reaction tRNA(Asn) + L-asparagine + ATP = L-asparaginyl-tRNA(Asn) + AMP + diphosphate + H(+). The polypeptide is Asparagine--tRNA ligase (Pseudoalteromonas atlantica (strain T6c / ATCC BAA-1087)).